Consider the following 295-residue polypeptide: ATP synthase gamma chain (295 aa).

This sequence belongs to the ATPase gamma chain family. In terms of assembly, F-type ATPases have 2 components, CF(1) - the catalytic core - and CF(0) - the membrane proton channel. CF(1) has five subunits: alpha(3), beta(3), gamma(1), delta(1), epsilon(1). CF(0) has three main subunits: a, b and c.

Its subcellular location is the cell membrane. Its function is as follows. Produces ATP from ADP in the presence of a proton gradient across the membrane. The gamma chain is believed to be important in regulating ATPase activity and the flow of protons through the CF(0) complex. This is ATP synthase gamma chain from Acetivibrio thermocellus (strain ATCC 27405 / DSM 1237 / JCM 9322 / NBRC 103400 / NCIMB 10682 / NRRL B-4536 / VPI 7372) (Clostridium thermocellum).